Reading from the N-terminus, the 2845-residue chain is Multiple epidermal growth factor-like domains protein 8 (2845 aa).

The first 27 residues, 1–27, serve as a signal peptide directing secretion; sequence MALGKVLAMALVLALAVLGSLSPGARA. Residues 28-2647 are Extracellular-facing; sequence GDCKGQRQVL…FFRQDQAHID (2620 aa). Disulfide bonds link Cys-30–Cys-57, Cys-142–Cys-152, Cys-146–Cys-158, Cys-174–Cys-184, Cys-178–Cys-191, and Cys-193–Cys-202. Residues 30–140 form the CUB 1 domain; sequence CKGQRQVLRE…LGFNASFRFS (111 aa). Asn-50 is a glycosylation site (N-linked (GlcNAc...) asparagine). EGF-like domains are found at residues 138-168 and 170-203; these read RFSL…GGPD and GLQE…RACD. Asn-217 carries N-linked (GlcNAc...) asparagine glycosylation. Kelch repeat units follow at residues 241-287, 290-338, 346-399, 402-453, 459-511, and 525-575; these read LLAV…AVAW, SLVL…AGHA, WLYV…FHAP, ALLV…FHTA, YMVV…APPS, and VLLV…SRDP. PSI domains lie at 561-613, 847-899, and 900-947; these read YCSM…GDCQ, SCTS…TLCP, and LCEE…EECP. Asn-1048 carries N-linked (GlcNAc...) asparagine glycosylation. The 42-residue stretch at 1074 to 1115 folds into the EGF-like 3; calcium-binding domain; sequence DVDECRLGLARCHPRATCLNTPLSYECHCQRGYQGDGISHCN. 16 disulfides stabilise this stretch: Cys-1078/Cys-1091, Cys-1085/Cys-1100, Cys-1102/Cys-1114, Cys-1163/Cys-1171, Cys-1165/Cys-1179, Cys-1182/Cys-1191, Cys-1194/Cys-1208, Cys-1211/Cys-1224, Cys-1213/Cys-1231, Cys-1233/Cys-1242, Cys-1245/Cys-1259, Cys-1263/Cys-1302, Cys-1336/Cys-1367, Cys-1407/Cys-1421, Cys-1415/Cys-1433, and Cys-1435/Cys-1444. 2 Laminin EGF-like domains span residues 1163–1210 and 1211–1261; these read CGCS…GCRP and CQCN…SCFR. One can recognise a CUB 2 domain in the interval 1263-1405; that stretch reads CGGRALLTNV…WGFNASVGSA (143 aa). Asn-1271 carries an N-linked (GlcNAc...) asparagine glycan. Position 1353 is a phosphothreonine (Thr-1353). The 43-residue stretch at 1403 to 1445 folds into the EGF-like 4 domain; it reads GSARCGSGGPGSCPVPQECVPQDGAAGAGLCRCPQGWAGPHCR. Kelch repeat units follow at residues 1522 to 1570, 1580 to 1626, 1632 to 1679, 1685 to 1735, 1796 to 1843, and 1852 to 1898; these read TLWM…SFHA, AMYL…HTLT, SLLL…SAVY, SLYV…VRGS, TMVV…ESVA, and RLYI…CHGA. The segment at 1726 to 1745 is disordered; it reads RDRMRNVRGSSRGLGQVPGE. PSI domains are found at residues 1876–1916, 1924–1979, 2060–2118, and 2120–2177; these read PCRL…SPCS, ECRR…NDCR, PCHL…ESCS, and GCAQ…LSCP. Asn-2066 carries N-linked (GlcNAc...) asparagine glycosylation. Residues 2178–2216 enclose the EGF-like 5 domain; sequence PEDECANGHHDCNETQNCHDQPHGYECSCKTGYTMDNMT. 2 cysteine pairs are disulfide-bonded: Cys-2182–Cys-2195 and Cys-2189–Cys-2204. Asn-2229 carries N-linked (GlcNAc...) asparagine glycosylation. Intrachain disulfides connect Cys-2253–Cys-2261, Cys-2255–Cys-2270, Cys-2273–Cys-2282, Cys-2285–Cys-2299, Cys-2380–Cys-2389, Cys-2382–Cys-2397, Cys-2399–Cys-2424, and Cys-2427–Cys-2441. Laminin EGF-like domains lie at 2253-2301 and 2380-2443; these read CRCN…TCRP and CQCN…QCYR. Residues 2523-2564 form a disordered region; sequence TVHIQPPPAPPPPPPPADGGPRGAGDPGGAGASSGPGAPAEP. The segment covering 2527–2540 has biased composition (pro residues); the sequence is QPPPAPPPPPPPAD. The segment covering 2542–2556 has biased composition (gly residues); the sequence is GPRGAGDPGGAGASS. The helical transmembrane segment at 2648 to 2668 threads the bilayer; sequence LFVFFSVFFSCFFLFLSLCVL. The Cytoplasmic segment spans residues 2669–2845; it reads LWKAKQALDQ…SQDNLTSMSL (177 aa). Residues 2817 to 2831 show a composition bias toward gly residues; sequence GGGAGGSGHGTGAGR. The interval 2817–2845 is disordered; the sequence is GGGAGGSGHGTGAGRKGLLSQDNLTSMSL. Positions 2836-2845 are enriched in polar residues; the sequence is SQDNLTSMSL.

It localises to the membrane. Acts as a negative regulator of hedgehog signaling. The sequence is that of Multiple epidermal growth factor-like domains protein 8 (MEGF8) from Homo sapiens (Human).